The chain runs to 229 residues: MVHPLLFLEFFRKLLEPLHMSEAGADAVAYTWLIMLLLLLFSFLATRALKMIPCGLQNFMEVVVGGVENMIVETMGEHGRPYFPLVATVGLFVLVSNLIGLIPGFFPPTANINTTAACAIVVFIATHVVGIKRHGIGYIKHFCGPILWLAPVMFFIEVIGHLSRPLSLTLRLFGNMNGHELVLIIFFGLAPFLVPLPMMLMGVLVSFIQAFVFMLLTMIYIQGSLEEAH.

Helical transmembrane passes span 25-45, 86-106, 111-131, 142-162, 181-201, and 202-222; these read ADAVAYTWLIMLLLLLFSFLA, VATVGLFVLVSNLIGLIPGFF, NINTTAACAIVVFIATHVVGI, FCGPILWLAPVMFFIEVIGHL, LVLIIFFGLAPFLVPLPMMLM, and GVLVSFIQAFVFMLLTMIYIQ.

Belongs to the ATPase A chain family. F-type ATPases have 2 components, CF(1) - the catalytic core - and CF(0) - the membrane proton channel. CF(1) has five subunits: alpha(3), beta(3), gamma(1), delta(1), epsilon(1). CF(0) has three main subunits: a(1), b(2) and c(9-12). The alpha and beta chains form an alternating ring which encloses part of the gamma chain. CF(1) is attached to CF(0) by a central stalk formed by the gamma and epsilon chains, while a peripheral stalk is formed by the delta and b chains.

It is found in the cell inner membrane. Functionally, key component of the proton channel; it plays a direct role in the translocation of protons across the membrane. The polypeptide is ATP synthase subunit a 1 (Pelobacter propionicus (strain DSM 2379 / NBRC 103807 / OttBd1)).